The following is a 108-amino-acid chain: X antigen family member 5 (108 aa).

Residues 20–108 (VGPMLEPSVP…PEGGEGKPQL (89 aa)) form a disordered region. 2 stretches are compositionally biased toward basic and acidic residues: residues 40–52 (SQDHTPGQKREDD) and 94–108 (EQFKMPEGGEGKPQL).

It belongs to the GAGE family.

This chain is X antigen family member 5 (XAGE5), found in Homo sapiens (Human).